Reading from the N-terminus, the 637-residue chain is Threonine--tRNA ligase (637 aa).

Residues 1–61 (MLNITLPDCS…VEDSAVQIIT (61 aa)) enclose the TGS domain. The catalytic stretch occupies residues 242 to 533 (DHRKLGKQLD…LIENHAGSFP (292 aa)). C333, H384, and H510 together coordinate Zn(2+).

Belongs to the class-II aminoacyl-tRNA synthetase family. As to quaternary structure, homodimer. It depends on Zn(2+) as a cofactor.

The protein localises to the cytoplasm. The enzyme catalyses tRNA(Thr) + L-threonine + ATP = L-threonyl-tRNA(Thr) + AMP + diphosphate + H(+). Catalyzes the attachment of threonine to tRNA(Thr) in a two-step reaction: L-threonine is first activated by ATP to form Thr-AMP and then transferred to the acceptor end of tRNA(Thr). Also edits incorrectly charged L-seryl-tRNA(Thr). In Neisseria gonorrhoeae (strain ATCC 700825 / FA 1090), this protein is Threonine--tRNA ligase.